We begin with the raw amino-acid sequence, 901 residues long: MLIKLLTKVFGSSNDRTLRRMRKAVEQINKMEPDFVKLSDDELKAKTIEFRARLEKGEELEALIPEAFATVREASKRVFGMRHFDVQLLGGMVLNDRCIAEMRTGEGKTLTATLPAYLNALSGKGVHVVTVNDYLAQRDAENNRALFEFLGLSIGINLPGLPAPAKREAYAADITYGTNNEYGFDYLRDNMAFSPEERVQRKLNYALVDEVDSILIDEARTPLIISGPAEDSSELYIKVNKIIPNLIRQEKEDSDSFQGEGHFSVDEKARQVHLTERGLVAVEELMVSEGIMAEGESLYSPGNIMMMHHVTAALRAHVLFTRDVDYIVKDGEVIIVDEHTGRTMQGRRWSDGLHQAVEAKEGVDIQNENQTLASITFQNYFRLYNKLAGMTGTADTEAFEFSSIYKLDTIVIPTNRPMVRKDLPDLVYMTEMEKIGAIIEDIRERTANGQPVLVGTISIEKSEVVSQELTRAGVKHEVLNAKFHAREADIVSQAGQPGAVTIATNMAGRGTDIVLGGSWQAEIAALEDASAEQIDAIKAAWKIRHDAVLASGGLHIIGTERHESRRIDNQLRGRSGRQGDHGSSRFYLSMEDALMRIFASDRVTNMMRKLGMKPGEAIEHPWVTKAIANAQRKVESRNFDIRKQLLEYDDVANDQRRAIYSQRNELLDVSDVSETIASIREDVYKTTIDSYIPPQSMEEMWDVAGLQERLSNDFDLTLPIADWLVAEPNLHEETLRERIMQQAQEQYQRKEEVVGVEMMRSFEKGVMLQTLDSLWKEHLAAMDYLRQGIHLRGYAQKDPKQEYKRESFAMFAAMLESLKYEVVSTLSKVQVRMPEEVEQMEEQRRQESERLAQQQQLSHVDAETEAAQSLAEQSGERKVGRNDPCPCGSGKKYKQCHGRLA.

Residues glutamine 87, 105–109, and aspartate 512 contribute to the ATP site; that span reads GEGKT. Residues 839–901 are disordered; sequence QMEEQRRQES…KYKQCHGRLA (63 aa). Positions 841–850 are enriched in basic and acidic residues; that stretch reads EEQRRQESER. Cysteine 885, cysteine 887, cysteine 896, and histidine 897 together coordinate Zn(2+). Residues 891–901 are compositionally biased toward basic residues; that stretch reads KKYKQCHGRLA.

It belongs to the SecA family. As to quaternary structure, monomer and homodimer. Part of the essential Sec protein translocation apparatus which comprises SecA, SecYEG and auxiliary proteins SecDF-YajC and YidC. The cofactor is Zn(2+).

Its subcellular location is the cell inner membrane. The protein localises to the cytoplasm. The enzyme catalyses ATP + H2O + cellular proteinSide 1 = ADP + phosphate + cellular proteinSide 2.. In terms of biological role, part of the Sec protein translocase complex. Interacts with the SecYEG preprotein conducting channel. Has a central role in coupling the hydrolysis of ATP to the transfer of proteins into and across the cell membrane, serving both as a receptor for the preprotein-SecB complex and as an ATP-driven molecular motor driving the stepwise translocation of polypeptide chains across the membrane. The sequence is that of Protein translocase subunit SecA from Erwinia tasmaniensis (strain DSM 17950 / CFBP 7177 / CIP 109463 / NCPPB 4357 / Et1/99).